The primary structure comprises 138 residues: uncharacterized protein (138 aa).

35–42 (DFIGSFYN) serves as a coordination point for ATP.

This is an uncharacterized protein from Acanthamoeba polyphaga mimivirus (APMV).